The primary structure comprises 185 residues: MTEPADDLVFIAAIAGAHGVRGECKVKSFAGNPADAFKYGAFLDIDGKTILTPKAARPVKDGFVVRFAEPLDRDKAQALKGTKLHVLRSALPELEEDEFYHSDLLGLKVQGLDGAPMGTLKAVHNFGSGDLLEITGTPDRNGSWMLPFTREFVPHVSIAEGVITIDPPEDVGSKAEEEGGGAPDD.

In terms of domain architecture, PRC barrel spans 96 to 171 (EDEFYHSDLL…VITIDPPEDV (76 aa)). Positions 165–185 (IDPPEDVGSKAEEEGGGAPDD) are disordered.

Belongs to the RimM family. Binds ribosomal protein uS19.

The protein resides in the cytoplasm. Functionally, an accessory protein needed during the final step in the assembly of 30S ribosomal subunit, possibly for assembly of the head region. Essential for efficient processing of 16S rRNA. May be needed both before and after RbfA during the maturation of 16S rRNA. It has affinity for free ribosomal 30S subunits but not for 70S ribosomes. The protein is Ribosome maturation factor RimM of Maricaulis maris (strain MCS10) (Caulobacter maris).